The primary structure comprises 102 residues: MKNQKIRIRLKAFDHQMLDQSATKIVDTAKRTGAQVAGPVPLPTEKSIYTILRSPHVNKDSREQFEMRVHKRLIDILEPTPKTVDALMRLDLPAGVDIEIKL.

The protein belongs to the universal ribosomal protein uS10 family. In terms of assembly, part of the 30S ribosomal subunit.

Functionally, involved in the binding of tRNA to the ribosomes. This Desulforamulus reducens (strain ATCC BAA-1160 / DSM 100696 / MI-1) (Desulfotomaculum reducens) protein is Small ribosomal subunit protein uS10.